The following is a 312-amino-acid chain: Putative S-adenosyl-L-methionine-dependent methyltransferase BCG_1768c (312 aa).

S-adenosyl-L-methionine-binding positions include D130 and 159–160 (DL).

The protein belongs to the UPF0677 family.

In terms of biological role, exhibits S-adenosyl-L-methionine-dependent methyltransferase activity. This is Putative S-adenosyl-L-methionine-dependent methyltransferase BCG_1768c from Mycobacterium bovis (strain BCG / Pasteur 1173P2).